A 314-amino-acid polypeptide reads, in one-letter code: Aspartate carbamoyltransferase catalytic subunit (314 aa).

Residues arginine 63 and threonine 64 each contribute to the carbamoyl phosphate site. Lysine 91 is a binding site for L-aspartate. Carbamoyl phosphate-binding residues include arginine 113, histidine 143, and glutamine 146. L-aspartate contacts are provided by arginine 176 and arginine 228. Carbamoyl phosphate contacts are provided by alanine 269 and proline 270.

The protein belongs to the aspartate/ornithine carbamoyltransferase superfamily. ATCase family. In terms of assembly, heterododecamer (2C3:3R2) of six catalytic PyrB chains organized as two trimers (C3), and six regulatory PyrI chains organized as three dimers (R2).

The enzyme catalyses carbamoyl phosphate + L-aspartate = N-carbamoyl-L-aspartate + phosphate + H(+). It functions in the pathway pyrimidine metabolism; UMP biosynthesis via de novo pathway; (S)-dihydroorotate from bicarbonate: step 2/3. In terms of biological role, catalyzes the condensation of carbamoyl phosphate and aspartate to form carbamoyl aspartate and inorganic phosphate, the committed step in the de novo pyrimidine nucleotide biosynthesis pathway. The sequence is that of Aspartate carbamoyltransferase catalytic subunit from Cutibacterium acnes (strain DSM 16379 / KPA171202) (Propionibacterium acnes).